The following is a 523-amino-acid chain: UDP-glucuronosyltransferase 3A1 (523 aa).

The N-terminal stretch at 1 to 22 is a signal peptide; the sequence is MVGQRVLLLVAFLLSGVLLSEA. At 23–483 the chain is on the extracellular side; it reads AKILTISTLG…YAFQQPWHEQ (461 aa). N-linked (GlcNAc...) asparagine glycosylation is present at Asn52. The chain crosses the membrane as a helical span at residues 484-504; it reads YLIDVFVFLLGLTLGTMWLCG. Over 505–523 the chain is Cytoplasmic; that stretch reads KLLGVVARWLRGARKVKKT.

The protein belongs to the UDP-glycosyltransferase family.

The protein resides in the membrane. The catalysed reaction is glucuronate acceptor + UDP-alpha-D-glucuronate = acceptor beta-D-glucuronoside + UDP + H(+). In terms of biological role, UDP-glucuronosyltransferases catalyze phase II biotransformation reactions in which lipophilic substrates are conjugated with glucuronic acid to increase water solubility and enhance excretion. They are of major importance in the conjugation and subsequent elimination of potentially toxic xenobiotics and endogenous compounds. The sequence is that of UDP-glucuronosyltransferase 3A1 (UGT3A1) from Homo sapiens (Human).